A 190-amino-acid chain; its full sequence is Potassium-transporting ATPase KdpC subunit (190 aa).

The chain crosses the membrane as a helical span at residues 6-26 (PAVFLVLLLTLITGLLYPLLT). The interval 67–88 (GRPSATSDRPYNPLASSGSNLA) is disordered. The segment covering 69–88 (PSATSDRPYNPLASSGSNLA) has biased composition (polar residues).

This sequence belongs to the KdpC family. In terms of assembly, the system is composed of three essential subunits: KdpA, KdpB and KdpC.

It is found in the cell inner membrane. Functionally, part of the high-affinity ATP-driven potassium transport (or Kdp) system, which catalyzes the hydrolysis of ATP coupled with the electrogenic transport of potassium into the cytoplasm. This subunit acts as a catalytic chaperone that increases the ATP-binding affinity of the ATP-hydrolyzing subunit KdpB by the formation of a transient KdpB/KdpC/ATP ternary complex. This Erwinia tasmaniensis (strain DSM 17950 / CFBP 7177 / CIP 109463 / NCPPB 4357 / Et1/99) protein is Potassium-transporting ATPase KdpC subunit.